Reading from the N-terminus, the 331-residue chain is Homoserine kinase (331 aa).

Belongs to the pseudomonas-type ThrB family.

It catalyses the reaction L-homoserine + ATP = O-phospho-L-homoserine + ADP + H(+). It participates in amino-acid biosynthesis; L-threonine biosynthesis; L-threonine from L-aspartate: step 4/5. This chain is Homoserine kinase, found in Burkholderia pseudomallei (strain 1710b).